We begin with the raw amino-acid sequence, 690 residues long: Subtilisin-like protease 1 (690 aa).

The N-terminal stretch at 1 to 25 is a signal peptide; sequence MMLNKKVVALCTLTLHLFCIFLCLG. The propeptide at 26 to 219 is inhibition peptide; sequence KEVRSEENGK…IESDKLVSAD (194 aa). Residues 99 to 131 are disordered; the sequence is EKNKNDNHNNNNNNNNISSSSSSSSNTFGEEKE. Residues 106–124 are compositionally biased toward low complexity; that stretch reads HNNNNNNNNISSSSSSSSN. N-linked (GlcNAc...) asparagine glycosylation is present at asparagine 114. The Ca(2+) site is built by asparagine 147, threonine 150, and proline 152. Asparagine 173 is a glycosylation site (N-linked (GlcNAc...) asparagine). Glycine 207 is a Ca(2+) binding site. Asparagine 263 is a glycosylation site (N-linked (GlcNAc...) asparagine). 2 disordered regions span residues 266–286 and 305–334; these read HAATSKRKRHSTNERGYDTFS and NNNNYYYSHSSNGHNSSSRNSSSSRSRPGK. A compositionally biased stretch (low complexity) spans 305–330; the sequence is NNNNYYYSHSSNGHNSSSRNSSSSRS. Asparagine 319 and asparagine 324 each carry an N-linked (GlcNAc...) asparagine glycan. Residue glutamate 340 participates in Ca(2+) binding. The Peptidase S8 domain maps to 345 to 663; sequence QWGLDLSRLD…AGYADINKAV (319 aa). 2 disulfides stabilise this stretch: cysteine 371-cysteine 481 and cysteine 460-cysteine 477. Catalysis depends on aspartate 374, which acts as the Charge relay system. Aspartate 383, glutamate 394, arginine 398, phenylalanine 401, aspartate 402, aspartate 403, aspartate 404, asparagine 406, isoleucine 408, aspartate 410, and aspartate 411 together coordinate Ca(2+). An N-linked (GlcNAc...) asparagine glycan is attached at asparagine 419. The Charge relay system role is filled by histidine 430. 4 residues coordinate Ca(2+): isoleucine 441, asparagine 444, isoleucine 446, and valine 448. 3 N-linked (GlcNAc...) asparagine glycosylation sites follow: asparagine 490, asparagine 503, and asparagine 522. Residues cysteine 523 and cysteine 536 are joined by a disulfide bond. A glycan (N-linked (GlcNAc...) asparagine) is linked at asparagine 605. The active-site Charge relay system is serine 608. N-linked (GlcNAc...) asparagine glycosylation occurs at asparagine 677.

Belongs to the peptidase S8 family. As to quaternary structure, heterodimer between p54 form and prodomain p31; the interaction inhibits p54 catalytic activity. Heterodimer p31-p54 is monomeric at basic pH and dimeric at acidic pH; dimerization is driven by the N-terminal prodomain (p31). Ca(2+) serves as cofactor. Post-translationally, the prodomain (p31) is cleaved, probably by autocatalysis, during the transport to or in the Golgi apparatus, and remains non-covalently associated with the p54 form as an inhibitor. p54 is further cleaved into the p47 form. This cleavage is likely occurring in the exoneme prior to egress and is mediated by PMX/plasmepsin X. The p54-to-p47 conversion can be also autocatalytic. Heterodimer p31-p54 is activated by cleavage of prodomain (p31) by the aspartic protease PMX; cleavage by PMX abolishes inhibitory capacity of p31. Primary autocatalytic processing of SUB1 is essential for parasite growth; the p54-to-p47 conversion is dispensable for SUB1 functions in the parasites. The disulfide bond between Cys-523 and Cys-536 acts as a redox-sensitive disulfide switch. The oxidized form is required for catalytic activity. In terms of processing, the relevance of N-glycosylation is not clear. In an insect expression system, SUB1 glycosylation appears to affect its processing into the active mature form suggesting that SUB1 may not be N-glycosylated in parasites.

It localises to the secreted. The protein localises to the parasitophorous vacuole lumen. It carries out the reaction Hydrolysis of proteins with broad specificity for peptide bonds, and a preference for a large uncharged residue in P1. Hydrolyzes peptide amides.. With respect to regulation, p54 and probably p47 forms are inhibited by the non-covalent interaction with the cleaved propeptide. Inhibited by subtilisin propeptide-like protein SUB1-ProM. Inhibited by 3,4-dichloroisocoumarin (DCI) and 4-(hydroxymercuri)benzoic acid (pHMB). Partially inhibited by chymostatin, leupeptin, phenylmethylsulfonyl fluoride (PMSF), and 4-(2-aminoethyl)benzenesulfonyl fluoride. Serine protease which plays an essential role in merozoite invasion of and egress from host erythrocytes by processing and activating various merozoite surface and parasitophorous vacuole proteins. Mediates the proteolytic maturation of serine proteases SERA4, SERA5 and SERA6 just prior to merozoite egress. Prior to merozoite egress, cleaves merozoite surface proteins MSP1, MSP6 and MSP7, which form the MSP1/6/7 complex, and thereby may prime the parasite cell surface for invasion of fresh erythrocytes. Prior to merozoite egress, cleaves MSRP2 converting it to MSRP2 p25 form, and RAP1 converting it to RAP1 p67 form. The chain is Subtilisin-like protease 1 from Plasmodium falciparum.